Here is a 247-residue protein sequence, read N- to C-terminus: Chymase (247 aa).

A signal peptide spans 1–19; that stretch reads MNLHALCLLLLLLGSSTKA. Positions 20–21 are cleaved as a propeptide — activation peptide; sequence GE. One can recognise a Peptidase S1 domain in the interval 22 to 245; sequence IIGGTECIPH…YRPWINKILR (224 aa). A disulfide bridge connects residues C51 and C67. The active-site Charge relay system is the H66. N-linked (GlcNAc...) asparagine glycosylation occurs at N80. D110 (charge relay system) is an active-site residue. 2 cysteine pairs are disulfide-bonded: C144-C209 and C175-C188. Residue S203 is the Charge relay system of the active site.

This sequence belongs to the peptidase S1 family. Granzyme subfamily. As to expression, mast cells.

It is found in the secreted. Its subcellular location is the cytoplasmic granule. The enzyme catalyses Preferential cleavage: Phe-|-Xaa &gt; Tyr-|-Xaa &gt; Trp-|-Xaa &gt; Leu-|-Xaa.. Functionally, major secreted protease of mast cells with suspected roles in vasoactive peptide generation, extracellular matrix degradation, and regulation of gland secretion. The protein is Chymase (Cma1) of Rattus norvegicus (Rat).